The primary structure comprises 306 residues: Protoheme IX farnesyltransferase (306 aa).

The next 9 helical transmembrane spans lie at 28-48, 53-73, 105-125, 127-147, 156-176, 182-202, 227-244, 246-266, and 283-303; these read LGLV…AIML, FLSS…IMAG, ASIL…LFTI, IETG…YSVW, TIIG…AIEP, AWML…ALAI, LSML…FFMQ, LGTV…LLAI, and FVYS…VTLI.

The protein belongs to the UbiA prenyltransferase family. Protoheme IX farnesyltransferase subfamily. In terms of assembly, interacts with CtaA.

The protein resides in the cell membrane. It carries out the reaction heme b + (2E,6E)-farnesyl diphosphate + H2O = Fe(II)-heme o + diphosphate. It functions in the pathway porphyrin-containing compound metabolism; heme O biosynthesis; heme O from protoheme: step 1/1. Its function is as follows. Converts heme B (protoheme IX) to heme O by substitution of the vinyl group on carbon 2 of heme B porphyrin ring with a hydroxyethyl farnesyl side group. The sequence is that of Protoheme IX farnesyltransferase from Macrococcus caseolyticus (strain JCSC5402) (Macrococcoides caseolyticum).